We begin with the raw amino-acid sequence, 123 residues long: Small ribosomal subunit protein uS13 (123 aa).

A disordered region spans residues 97–123 (PVRGQRTRSNARTRKGPRPSRIKKKGK). The segment covering 101 to 123 (QRTRSNARTRKGPRPSRIKKKGK) has biased composition (basic residues).

This sequence belongs to the universal ribosomal protein uS13 family. Part of the 30S ribosomal subunit. Forms a loose heterodimer with protein S19. Forms two bridges to the 50S subunit in the 70S ribosome.

In terms of biological role, located at the top of the head of the 30S subunit, it contacts several helices of the 16S rRNA. In the 70S ribosome it contacts the 23S rRNA (bridge B1a) and protein L5 of the 50S subunit (bridge B1b), connecting the 2 subunits; these bridges are implicated in subunit movement. Contacts the tRNAs in the A and P-sites. In Fervidobacterium nodosum (strain ATCC 35602 / DSM 5306 / Rt17-B1), this protein is Small ribosomal subunit protein uS13.